The chain runs to 347 residues: Protein RecA (347 aa).

Residue 65 to 72 participates in ATP binding; the sequence is GPESSGKT. Over residues 327–336 the composition is skewed to basic and acidic residues; the sequence is KFEPTELSRE. The disordered stretch occupies residues 327–347; it reads KFEPTELSREEGDEDTLEDAM. Positions 337 to 347 are enriched in acidic residues; that stretch reads EGDEDTLEDAM.

The protein belongs to the RecA family.

Its subcellular location is the cytoplasm. In terms of biological role, can catalyze the hydrolysis of ATP in the presence of single-stranded DNA, the ATP-dependent uptake of single-stranded DNA by duplex DNA, and the ATP-dependent hybridization of homologous single-stranded DNAs. It interacts with LexA causing its activation and leading to its autocatalytic cleavage. The protein is Protein RecA of Xylella fastidiosa (strain M12).